A 257-amino-acid chain; its full sequence is Urease accessory protein UreD 3 (257 aa).

A disordered region spans residues 1–22 (MSVRATARLRAEPDGRDGTALP).

Belongs to the UreD family. In terms of assembly, ureD, UreF and UreG form a complex that acts as a GTP-hydrolysis-dependent molecular chaperone, activating the urease apoprotein by helping to assemble the nickel containing metallocenter of UreC. The UreE protein probably delivers the nickel.

Its subcellular location is the cytoplasm. Functionally, required for maturation of urease via the functional incorporation of the urease nickel metallocenter. The sequence is that of Urease accessory protein UreD 3 from Streptomyces griseus subsp. griseus (strain JCM 4626 / CBS 651.72 / NBRC 13350 / KCC S-0626 / ISP 5235).